Here is a 162-residue protein sequence, read N- to C-terminus: NADH-quinone oxidoreductase subunit I 1 (162 aa).

2 consecutive 4Fe-4S ferredoxin-type domains span residues 44–74 (LRTYENGLEMCVGCELCQVACPAAAITVQAA) and 90–119 (YKYQVDLLRCIFCGMCEEACPTDCLHLTQE). [4Fe-4S] cluster contacts are provided by C54, C57, C60, C64, C99, C102, C105, and C109.

This sequence belongs to the complex I 23 kDa subunit family. In terms of assembly, NDH-1 is composed of 14 different subunits. Subunits NuoA, H, J, K, L, M, N constitute the membrane sector of the complex. It depends on [4Fe-4S] cluster as a cofactor.

Its subcellular location is the cell membrane. It catalyses the reaction a quinone + NADH + 5 H(+)(in) = a quinol + NAD(+) + 4 H(+)(out). Functionally, NDH-1 shuttles electrons from NADH, via FMN and iron-sulfur (Fe-S) centers, to quinones in the respiratory chain. The immediate electron acceptor for the enzyme in this species is believed to be ubiquinone. Couples the redox reaction to proton translocation (for every two electrons transferred, four hydrogen ions are translocated across the cytoplasmic membrane), and thus conserves the redox energy in a proton gradient. This chain is NADH-quinone oxidoreductase subunit I 1, found in Symbiobacterium thermophilum (strain DSM 24528 / JCM 14929 / IAM 14863 / T).